Consider the following 910-residue polypeptide: Protein translocase subunit SecA (910 aa).

ATP-binding positions include Q89, 107-111, and D496; that span reads GEGKT. The tract at residues 873 to 910 is disordered; that stretch reads QEFSGGNLNRSQSNGSSVTVTTSSGGGTERKTSRRRKR. A compositionally biased stretch (polar residues) spans 876–886; it reads SGGNLNRSQSN.

Belongs to the SecA family. As to quaternary structure, monomer and homodimer. Part of the essential Sec protein translocation apparatus which comprises SecA, SecYEG and auxiliary proteins SecDF. Other proteins may also be involved.

The protein resides in the cell inner membrane. The protein localises to the cytoplasm. The catalysed reaction is ATP + H2O + cellular proteinSide 1 = ADP + phosphate + cellular proteinSide 2.. Its function is as follows. Part of the Sec protein translocase complex. Interacts with the SecYEG preprotein conducting channel. Has a central role in coupling the hydrolysis of ATP to the transfer of proteins into and across the cell membrane, serving as an ATP-driven molecular motor driving the stepwise translocation of polypeptide chains across the membrane. This is Protein translocase subunit SecA from Leptospira interrogans serogroup Icterohaemorrhagiae serovar copenhageni (strain Fiocruz L1-130).